We begin with the raw amino-acid sequence, 320 residues long: Beta-ketoacyl-[acyl-carrier-protein] synthase III (320 aa).

Catalysis depends on residues Cys-114 and His-247. The segment at 248-252 (QANRR) is ACP-binding. The active site involves Asn-277.

Belongs to the thiolase-like superfamily. FabH family. As to quaternary structure, homodimer.

The protein localises to the cytoplasm. The catalysed reaction is malonyl-[ACP] + acetyl-CoA + H(+) = 3-oxobutanoyl-[ACP] + CO2 + CoA. It functions in the pathway lipid metabolism; fatty acid biosynthesis. In terms of biological role, catalyzes the condensation reaction of fatty acid synthesis by the addition to an acyl acceptor of two carbons from malonyl-ACP. Catalyzes the first condensation reaction which initiates fatty acid synthesis and may therefore play a role in governing the total rate of fatty acid production. Possesses both acetoacetyl-ACP synthase and acetyl transacylase activities. Its substrate specificity determines the biosynthesis of branched-chain and/or straight-chain of fatty acids. The sequence is that of Beta-ketoacyl-[acyl-carrier-protein] synthase III from Neisseria meningitidis serogroup A / serotype 4A (strain DSM 15465 / Z2491).